The chain runs to 923 residues: Protocadherin gamma-B4 (923 aa).

The N-terminal stretch at 1 to 30 (MGSGAGELGRAERLPVLFLFLLSLFCPALC) is a signal peptide. 6 consecutive Cadherin domains span residues 31 to 133 (EQIR…TPKF), 134 to 242 (TQNS…APVF), 243 to 345 (SQDI…APEV), 346 to 450 (IFQS…APVF), 451 to 560 (SQSS…APRV), and 568 to 673 (DGSA…LPDI). Residues 31–689 (EQIRYRIPEE…SDLEAELQFY (659 aa)) lie on the Extracellular side of the membrane. N-linked (GlcNAc...) asparagine glycans are attached at residues N417 and N543. The chain crosses the membrane as a helical span at residues 690–710 (LVVALALISVLFLVAMILAIA). The Cytoplasmic portion of the chain corresponds to 711–923 (LRLRRSSSPA…KKKSGKKEKK (213 aa)). Disordered stretches follow at residues 797–832 (SHQQ…WPNN) and 893–923 (ATLT…KEKK). Residues 913–923 (NKKKSGKKEKK) are compositionally biased toward basic residues.

Its subcellular location is the cell membrane. Functionally, potential calcium-dependent cell-adhesion protein. May be involved in the establishment and maintenance of specific neuronal connections in the brain. This chain is Protocadherin gamma-B4 (PCDHGB4), found in Pan troglodytes (Chimpanzee).